The sequence spans 252 residues: Transcriptional regulatory protein HptR (252 aa).

A Response regulatory domain is found at 3-118 (KVVICDDERI…QLEVILGRLV (116 aa)). Aspartate 55 carries the post-translational modification 4-aspartylphosphate. The region spanning 153–250 (NQIVDQIKQS…QMSPSDYCKQ (98 aa)) is the HTH araC/xylS-type domain. DNA-binding regions (H-T-H motif) lie at residues 170–191 (SDLI…KDHV) and 217–240 (HYEI…KKYL).

Phosphorylated by HptS.

The protein resides in the cytoplasm. Functionally, member of the two-component regulatory system HptS/HptR that regulates genes involved in hexose phosphate transport system in response to changes in extracellular phosphate sources. Activates uhpT expression to facilitate glucose-6-phosphate/G6P utilization by directly binding to its promoter. Antagonizes CcpA-dependent transcription of a subset of CcpA-regulated genes involved in antibiotic susceptibility. The chain is Transcriptional regulatory protein HptR (hptR) from Staphylococcus aureus (strain NCTC 8325 / PS 47).